The primary structure comprises 977 residues: Leucine--tRNA ligase (977 aa).

A 'HIGH' region motif is present at residues 11–21 (PYVNGYLHLGH). Residues 220-318 (VFYVYELYSL…EYYNTKVETQ (99 aa)) are insert. The 'KMSKS' region signature appears at 699–703 (KMSKS). K702 contributes to the ATP binding site.

Belongs to the class-I aminoacyl-tRNA synthetase family.

Its subcellular location is the cytoplasm. It catalyses the reaction tRNA(Leu) + L-leucine + ATP = L-leucyl-tRNA(Leu) + AMP + diphosphate. This Nanoarchaeum equitans (strain Kin4-M) protein is Leucine--tRNA ligase (leuS).